The chain runs to 331 residues: Ornithine lipid hydroxylase OlsE (331 aa).

5 consecutive transmembrane segments (helical) span residues 13–33 (VSSL…YFAF), 37–57 (MHLL…ALFE), 85–105 (GGVQ…ATVA), 120–140 (WPMA…LYMA), and 189–209 (LLGA…FIGL). One can recognise a Fatty acid hydroxylase domain in the interval 126 to 260 (VVLGLVIAEF…LVIWDQLLGT (135 aa)).

It belongs to the sterol desaturase family.

Its subcellular location is the cell inner membrane. The protein operates within lipid metabolism. Functionally, involved in the biosynthesis of ornithine lipids (OLs), which are phosphorus-free membrane lipids. Is responsible for the hydroxylation of OL within the ornithine moiety. This chain is Ornithine lipid hydroxylase OlsE, found in Rhizobium tropici.